The following is a 101-amino-acid chain: Small ribosomal subunit protein bS18c (101 aa).

Residues 82-101 (KQFERAESTPRTPGPRTRNK) are disordered.

The protein belongs to the bacterial ribosomal protein bS18 family. Part of the 30S ribosomal subunit.

It localises to the plastid. The protein localises to the chloroplast. The polypeptide is Small ribosomal subunit protein bS18c (Platanus occidentalis (Sycamore)).